The primary structure comprises 634 residues: Chaperone protein DnaK (634 aa).

Phosphothreonine; by autocatalysis is present on Thr193. The disordered stretch occupies residues 597 to 634 (GNANNTSSTESTTTNNNNEEDSKVVDSDYQEIDKKDGK). Low complexity predominate over residues 600-613 (NNTSSTESTTTNNN). Positions 616 to 634 (EDSKVVDSDYQEIDKKDGK) are enriched in basic and acidic residues.

The protein belongs to the heat shock protein 70 family.

Acts as a chaperone. The sequence is that of Chaperone protein DnaK from Ehrlichia canis (strain Jake).